The sequence spans 463 residues: Bifunctional protein HldE (463 aa).

The interval 1-311 is ribokinase; that stretch reads MKQILVVGDL…EEIALILNQT (311 aa). 191 to 194 is an ATP binding site; that stretch reads NRIE. Aspartate 260 is a catalytic residue. A cytidylyltransferase region spans residues 334–463; the sequence is FTNGCFDILH…IERIKRTCND (130 aa).

In the N-terminal section; belongs to the carbohydrate kinase PfkB family. The protein in the C-terminal section; belongs to the cytidylyltransferase family. In terms of assembly, homodimer.

The catalysed reaction is D-glycero-beta-D-manno-heptose 7-phosphate + ATP = D-glycero-beta-D-manno-heptose 1,7-bisphosphate + ADP + H(+). It catalyses the reaction D-glycero-beta-D-manno-heptose 1-phosphate + ATP + H(+) = ADP-D-glycero-beta-D-manno-heptose + diphosphate. It functions in the pathway nucleotide-sugar biosynthesis; ADP-L-glycero-beta-D-manno-heptose biosynthesis; ADP-L-glycero-beta-D-manno-heptose from D-glycero-beta-D-manno-heptose 7-phosphate: step 1/4. It participates in nucleotide-sugar biosynthesis; ADP-L-glycero-beta-D-manno-heptose biosynthesis; ADP-L-glycero-beta-D-manno-heptose from D-glycero-beta-D-manno-heptose 7-phosphate: step 3/4. In terms of biological role, catalyzes the phosphorylation of D-glycero-D-manno-heptose 7-phosphate at the C-1 position to selectively form D-glycero-beta-D-manno-heptose-1,7-bisphosphate. Catalyzes the ADP transfer from ATP to D-glycero-beta-D-manno-heptose 1-phosphate, yielding ADP-D-glycero-beta-D-manno-heptose. In Helicobacter pylori (strain Shi470), this protein is Bifunctional protein HldE.